The primary structure comprises 281 residues: Elongation factor 1-delta (281 aa).

Position 2 is an N-acetylalanine (Ala2). Lys17 bears the N6-acetyllysine mark. Residues Ser37, Glu40, Ser44, and Ser60 each carry the phosphoserine modification. Thr73 is subject to Phosphothreonine. Residues 80 to 115 are leucine-zipper; that stretch reads LVVRIASLEVENQSLRGVVQELQQAISKLEARLNVL. Phosphoserine occurs at positions 86, 91, 94, and 106. Lys107 bears the N6-acetyllysine mark. An N6-acetyllysine; alternate modification is found at Lys117. Position 117 is an N6-succinyllysine; alternate (Lys117). A disordered region spans residues 118–172; the sequence is SSPGHRATAPQTQHVSPMRQVEPPAKKPATPAEDDEDDDIDLFGSDNEEEDKEAA. Residue Ser119 is modified to Phosphoserine. The residue at position 129 (Thr129) is a Phosphothreonine. Ser133 is subject to Phosphoserine. The residue at position 147 (Thr147) is a Phosphothreonine. Positions 149-169 are enriched in acidic residues; it reads AEDDEDDDIDLFGSDNEEEDK. A Phosphoserine; by CK2 modification is found at Ser162. The segment at 173–281 is catalytic (GEF); it reads QLREERLRQY…SVDIAAFNKI (109 aa).

Belongs to the EF-1-beta/EF-1-delta family. In terms of assembly, EF-1 is composed of 4 subunits: alpha, beta, delta isoform 1, and gamma. Isoform 2 interacts with HSF1 and NFE2L2. As to expression, isoform 2 is specifically expressed in brain, cerebellum and testis.

The protein localises to the nucleus. EF-1-beta and EF-1-delta stimulate the exchange of GDP bound to EF-1-alpha to GTP, regenerating EF-1-alpha for another round of transfer of aminoacyl-tRNAs to the ribosome. Its function is as follows. Regulates induction of heat-shock-responsive genes through association with heat shock transcription factors and direct DNA-binding at heat shock promoter elements (HSE). This is Elongation factor 1-delta (EEF1D) from Homo sapiens (Human).